The primary structure comprises 366 residues: MSNPPSKLYIGLMSGTSLDGVDAALVSIQNGELELKAFQTFPYTDNLKKQLHHLNQTPHVDLKALCDMEYQVANAFSEATQQLLDNCDHVASDIRAIGSHGQTIFHAPDIPMSLQIGHPAFIAKNTGITTVADFRIDDMANNGQGAPLAPAFHQKLFGNTVGTAVVNIGGISNITFLDQQKTLGFDTGPGNGLMDEYCEQFFNCSYDADGKMAQTGQVNMALLSDLMQEPYFRLPAPKTTGKDLFNSDWLNPFLAKYSNVSKKDILSTLNQLTVDTIIQGLNTLPSQPKRLLICGGGAENKTLISRLQAQLSYPVKTTQSVGVPPHAIEAMMCAWLAEQRLNNTPIALQHITGATKDSVLGAVWHP.

Residue 15–22 coordinates ATP; that stretch reads GTSLDGVD.

Belongs to the anhydro-N-acetylmuramic acid kinase family.

The catalysed reaction is 1,6-anhydro-N-acetyl-beta-muramate + ATP + H2O = N-acetyl-D-muramate 6-phosphate + ADP + H(+). It participates in amino-sugar metabolism; 1,6-anhydro-N-acetylmuramate degradation. Its pathway is cell wall biogenesis; peptidoglycan recycling. Catalyzes the specific phosphorylation of 1,6-anhydro-N-acetylmuramic acid (anhMurNAc) with the simultaneous cleavage of the 1,6-anhydro ring, generating MurNAc-6-P. Is required for the utilization of anhMurNAc either imported from the medium or derived from its own cell wall murein, and thus plays a role in cell wall recycling. In Hydrogenovibrio crunogenus (strain DSM 25203 / XCL-2) (Thiomicrospira crunogena), this protein is Anhydro-N-acetylmuramic acid kinase.